Here is a 1017-residue protein sequence, read N- to C-terminus: Ubiquitin-like modifier-activating enzyme 1 (1017 aa).

2 repeat units span residues 26 to 163 (SHET…GQLF) and 419 to 571 (GKTL…QVVV). The segment at 26–571 (SHETMKKITS…GTKGNTQVVV (546 aa)) is 2 approximate repeats. Residues Ala-438, Asp-464, Arg-475, Lys-488, and 536-537 (DN) each bind ATP. The active-site Glycyl thioester intermediate is Cys-592. Residues 765-781 (IQTSENEPAPSSNTQQA) show a composition bias toward polar residues. The tract at residues 765–788 (IQTSENEPAPSSNTQQAGGDAEDD) is disordered.

The protein belongs to the ubiquitin-activating E1 family. As to quaternary structure, monomer.

The enzyme catalyses ATP + ubiquitin + [E1 ubiquitin-activating enzyme]-L-cysteine = AMP + diphosphate + S-ubiquitinyl-[E1 ubiquitin-activating enzyme]-L-cysteine.. Its pathway is protein modification; protein ubiquitination. In terms of biological role, catalyzes the first step in ubiquitin conjugation to mark cellular proteins for degradation through the ubiquitin-proteasome system. Activates ubiquitin by first adenylating its C-terminal glycine residue with ATP, and thereafter linking this residue to the side chain of a cysteine residue in E1, yielding a ubiquitin-E1 thioester and free AMP. The sequence is that of Ubiquitin-like modifier-activating enzyme 1 (uba1) from Dictyostelium discoideum (Social amoeba).